Consider the following 197-residue polypeptide: Holliday junction branch migration complex subunit RuvA (197 aa).

The tract at residues methionine 1–valine 63 is domain I. Residues asparagine 64–leucine 142 are domain II. The interval leucine 142–proline 146 is flexible linker. Residues alanine 147 to lysine 197 are domain III.

The protein belongs to the RuvA family. As to quaternary structure, homotetramer. Forms an RuvA(8)-RuvB(12)-Holliday junction (HJ) complex. HJ DNA is sandwiched between 2 RuvA tetramers; dsDNA enters through RuvA and exits via RuvB. An RuvB hexamer assembles on each DNA strand where it exits the tetramer. Each RuvB hexamer is contacted by two RuvA subunits (via domain III) on 2 adjacent RuvB subunits; this complex drives branch migration. In the full resolvosome a probable DNA-RuvA(4)-RuvB(12)-RuvC(2) complex forms which resolves the HJ.

It localises to the cytoplasm. The RuvA-RuvB-RuvC complex processes Holliday junction (HJ) DNA during genetic recombination and DNA repair, while the RuvA-RuvB complex plays an important role in the rescue of blocked DNA replication forks via replication fork reversal (RFR). RuvA specifically binds to HJ cruciform DNA, conferring on it an open structure. The RuvB hexamer acts as an ATP-dependent pump, pulling dsDNA into and through the RuvAB complex. HJ branch migration allows RuvC to scan DNA until it finds its consensus sequence, where it cleaves and resolves the cruciform DNA. The polypeptide is Holliday junction branch migration complex subunit RuvA (Lactococcus lactis subsp. cremoris (strain SK11)).